The following is a 305-amino-acid chain: Acetylglutamate kinase (305 aa).

Residues 78-79 (GG), arginine 100, and asparagine 202 each bind substrate.

Belongs to the acetylglutamate kinase family. ArgB subfamily.

Its subcellular location is the cytoplasm. The enzyme catalyses N-acetyl-L-glutamate + ATP = N-acetyl-L-glutamyl 5-phosphate + ADP. The protein operates within amino-acid biosynthesis; L-arginine biosynthesis; N(2)-acetyl-L-ornithine from L-glutamate: step 2/4. Catalyzes the ATP-dependent phosphorylation of N-acetyl-L-glutamate. The chain is Acetylglutamate kinase from Polaromonas sp. (strain JS666 / ATCC BAA-500).